The sequence spans 392 residues: Alanine--glyoxylate aminotransferase (392 aa).

N6-(pyridoxal phosphate)lysine is present on Lys209. Lys225 is subject to N6-acetyllysine; alternate. Lys225 carries the post-translational modification N6-succinyllysine; alternate. 2 positions are modified to N6-acetyllysine: Lys234 and Lys312. Position 360 (Arg360) interacts with substrate. A Microbody targeting signal motif is present at residues 390-392; that stretch reads KKL.

The protein belongs to the class-V pyridoxal-phosphate-dependent aminotransferase family. Homodimer. The cofactor is pyridoxal 5'-phosphate.

It is found in the peroxisome. It carries out the reaction L-serine + pyruvate = 3-hydroxypyruvate + L-alanine. It catalyses the reaction glyoxylate + L-alanine = glycine + pyruvate. Peroxisomal aminotransferase that catalyzes the transamination of glyoxylate to glycine and contributes to the glyoxylate detoxification. Also catalyzes the transamination between L-serine and pyruvate and contributes to gluconeogenesis from the L-serine metabolism. This is Alanine--glyoxylate aminotransferase from Pongo abelii (Sumatran orangutan).